Here is a 162-residue protein sequence, read N- to C-terminus: UPF0114 protein Sfri_3655 (162 aa).

Helical transmembrane passes span isoleucine 15–phenylalanine 35, leucine 53–valine 73, and isoleucine 136–leucine 156.

It belongs to the UPF0114 family.

Its subcellular location is the cell membrane. This is UPF0114 protein Sfri_3655 from Shewanella frigidimarina (strain NCIMB 400).